Consider the following 192-residue polypeptide: UPF0312 protein PSPTO_5071 (192 aa).

Positions 1–23 (MLKKSLAALALGTALLSAGQAMA) are cleaved as a signal peptide.

This sequence belongs to the UPF0312 family. Type 1 subfamily.

The protein resides in the periplasm. This Pseudomonas syringae pv. tomato (strain ATCC BAA-871 / DC3000) protein is UPF0312 protein PSPTO_5071.